The primary structure comprises 110 residues: MCCRRVFRLSHRKEGMESARQTKRVRVYVSGRVQGVFFRDSTRERAERLGVSGWVRNLPDGRVEAVFEGEAGAVDELVRWCHEGPPHARVEGVEVEEEPASGGARGFEVR.

The Acylphosphatase-like domain occupies 24-110 (RVRVYVSGRV…SGGARGFEVR (87 aa)). Active-site residues include Arg39 and Asn57.

This sequence belongs to the acylphosphatase family.

The catalysed reaction is an acyl phosphate + H2O = a carboxylate + phosphate + H(+). The sequence is that of Acylphosphatase (acyP) from Rubrobacter xylanophilus (strain DSM 9941 / JCM 11954 / NBRC 16129 / PRD-1).